A 330-amino-acid polypeptide reads, in one-letter code: MIMKLMRTVSVAVTGGTGQIAYSFLFALAHGDVFGSDCSIDLRVYDLPGLERALSGVRMELDDCAYPLLQSLRVTTSLEDACDGIDAAFLIGAAPRGPGMERSDLLKRNGEIFSLQGSVLNVCAKRDAKIFVVGNPVNTNCWIAMNKAPKLNRRNFHSMLRLDQNRMHTMLAHRAEVPLDEVTNVVVWGNHSAKQVPDFTQALISGKPAVEVISDRDWLENIMFPSIQNRGSAVIEARGKSSAGSAARALAEAARSIFLPKDGEWFSSGVCSDYNPYGIPDDLIFGFPCRMLPSGDYEIVPGLPWDAFIKNKIQISLDEISQEKASVSLL.

15–21 (GGTGQIA) is an NAD(+) binding site. Substrate is bound by residues Arg-96 and Arg-102. Residues Asn-109, Gln-116, and 133-135 (VGN) contribute to the NAD(+) site. Substrate-binding residues include Asn-135 and Arg-166. The Proton acceptor role is filled by His-191.

The protein belongs to the LDH/MDH superfamily. MDH type 2 family.

It carries out the reaction (S)-malate + NAD(+) = oxaloacetate + NADH + H(+). Catalyzes the reversible oxidation of malate to oxaloacetate. This is Malate dehydrogenase from Chlamydia caviae (strain ATCC VR-813 / DSM 19441 / 03DC25 / GPIC) (Chlamydophila caviae).